We begin with the raw amino-acid sequence, 478 residues long: ATP synthase subunit beta (478 aa).

Residue 152 to 159 (GGAGVGKT) coordinates ATP.

It belongs to the ATPase alpha/beta chains family. As to quaternary structure, F-type ATPases have 2 components, CF(1) - the catalytic core - and CF(0) - the membrane proton channel. CF(1) has five subunits: alpha(3), beta(3), gamma(1), delta(1), epsilon(1). CF(0) has three main subunits: a(1), b(2) and c(9-12). The alpha and beta chains form an alternating ring which encloses part of the gamma chain. CF(1) is attached to CF(0) by a central stalk formed by the gamma and epsilon chains, while a peripheral stalk is formed by the delta and b chains.

It localises to the cell membrane. The enzyme catalyses ATP + H2O + 4 H(+)(in) = ADP + phosphate + 5 H(+)(out). Produces ATP from ADP in the presence of a proton gradient across the membrane. The catalytic sites are hosted primarily by the beta subunits. This is ATP synthase subunit beta from Wolbachia pipientis subsp. Culex pipiens (strain wPip).